Reading from the N-terminus, the 434-residue chain is Methylenetetrahydrofolate--tRNA-(uracil-5-)-methyltransferase TrmFO (434 aa).

9-14 lines the FAD pocket; the sequence is GAGLAG.

Belongs to the MnmG family. TrmFO subfamily. FAD serves as cofactor.

The protein resides in the cytoplasm. The enzyme catalyses uridine(54) in tRNA + (6R)-5,10-methylene-5,6,7,8-tetrahydrofolate + NADH + H(+) = 5-methyluridine(54) in tRNA + (6S)-5,6,7,8-tetrahydrofolate + NAD(+). The catalysed reaction is uridine(54) in tRNA + (6R)-5,10-methylene-5,6,7,8-tetrahydrofolate + NADPH + H(+) = 5-methyluridine(54) in tRNA + (6S)-5,6,7,8-tetrahydrofolate + NADP(+). Catalyzes the folate-dependent formation of 5-methyl-uridine at position 54 (M-5-U54) in all tRNAs. The chain is Methylenetetrahydrofolate--tRNA-(uracil-5-)-methyltransferase TrmFO from Listeria monocytogenes serotype 4b (strain F2365).